Reading from the N-terminus, the 1651-residue chain is Alsin (1651 aa).

RCC1 repeat units lie at residues 59-108 (DGEV…AVTE), 109-167 (SGVV…ALSL), and 169-218 (REIW…ALVQ). A disordered region spans residues 425–462 (ETAAQSGSASTGPESLKDLREEQVKQESLQGKKSSSLM). Positions 427–437 (AAQSGSASTGP) are enriched in polar residues. The span at 439 to 449 (SLKDLREEQVK) shows a compositional bias: basic and acidic residues. A compositionally biased stretch (polar residues) spans 450–461 (QESLQGKKSSSL). Residues S459, S460, S477, and S486 each carry the phosphoserine modification. T504 is subject to Phosphothreonine. RCC1 repeat units follow at residues 519–570 (RTEV…ALTA) and 572–621 (SQVY…FLVD). The residue at position 527 (K527) is an N6-acetyllysine. The region spanning 684 to 879 (GYIASLHELA…ESLALHLGKK (196 aa)) is the DH domain. One can recognise a PH domain in the interval 895 to 1001 (GKMTDSLRKP…RAISQAVDQA (107 aa)). 8 MORN repeats span residues 1043-1065 (YDGR…DGKM), 1066-1088 (YSGM…NKAL), 1094-1116 (YVGH…SGEV), 1117-1139 (FEGC…KLTS), 1145-1167 (FIGQ…TRGE), 1169-1191 (YMGM…FGLY), 1192-1214 (YEGN…DDTI), and 1215-1238 (YEGE…HGDY). S1329 is subject to Phosphoserine. One can recognise a VPS9 domain in the interval 1507–1651 (KQPDIALLGF…YFQIQREKLN (145 aa)).

As to quaternary structure, forms a heteromeric complex with ALS2CL. Interacts with ALS2CL.

Functionally, may act as a GTPase regulator. Controls survival and growth of spinal motoneurons. The protein is Alsin (Als2) of Mus musculus (Mouse).